The primary structure comprises 628 residues: Probable potassium transport system protein Kup (628 aa).

Transmembrane regions (helical) follow at residues 15–35, 55–75, 104–124, 142–162, 173–193, 210–230, 252–272, 281–301, 342–362, 372–392, 400–420, and 426–446; these read LAIAAIGVVFGDIGTSPLYSL, VISLLFWAIVIVVGVKYVLFV, AGLLMMLGIFGACMFYGDAVI, PHLSHLVLPLTIVILILLFWI, LFGPIMVLWFVVLAALGLWHI, TFMAAHVLQAYVVLGSVVLVL, WYVLVMPSLVLNYFGQGALLM, PFFLLAPDWALLPLVVLSTIA, IYVPVVNWMLLFIILCIVIAF, YGIAVTATMVITTILACVVMV, LLVALIIGVFMTVDLGFFGAN, and EGGWLPLGIGALLFFLLMTWY.

It belongs to the HAK/KUP transporter (TC 2.A.72) family.

The protein resides in the cell inner membrane. The enzyme catalyses K(+)(in) + H(+)(in) = K(+)(out) + H(+)(out). Its function is as follows. Transport of potassium into the cell. Likely operates as a K(+):H(+) symporter. The sequence is that of Probable potassium transport system protein Kup from Paraburkholderia xenovorans (strain LB400).